The chain runs to 1057 residues: Histone deacetylase complex subunit SAP130 (1057 aa).

5 disordered regions span residues M1–Q68, T289–P314, G556–T594, Q624–P692, and N827–E880. The span at E41–H54 shows a compositional bias: basic and acidic residues. Residues T289–P301 show a composition bias toward polar residues. Composition is skewed to low complexity over residues Q579–A590 and Q624–S642. Residues R671–S682 are compositionally biased toward polar residues.

Belongs to the SAP130 family. In terms of assembly, component of a mSin3A corepressor complex that contains SIN3A, SAP130, SUDS3/SAP45, ARID4B/SAP180, HDAC1 and HDAC2.

It is found in the nucleus. Functionally, acts as a transcriptional repressor. May function in the assembly and/or enzymatic activity of the mSin3A corepressor complex or in mediating interactions between the complex and other regulatory complexes. The chain is Histone deacetylase complex subunit SAP130 (SAP130) from Gallus gallus (Chicken).